A 589-amino-acid chain; its full sequence is Guanylate-binding protein 2 (589 aa).

A GTPase domain (Globular) region spans residues 1-309 (MASEIHMLQP…GAISSGSLPC (309 aa)). The GB1/RHD3-type G domain maps to 35–276 (NQPVVVVAIV…FTSYIFSYSA (242 aa)). GTP is bound by residues 45 to 52 (GLYRTGKS), 181 to 182 (RD), and Leu245. A Cysteine methyl ester modification is found at Cys586. Cys586 carries the S-geranylgeranyl cysteine lipid modification. A propeptide spans 587–589 (TIL) (removed in mature form).

Belongs to the TRAFAC class dynamin-like GTPase superfamily. GB1/RHD3 GTPase family. GB1 subfamily. As to quaternary structure, homodimer; homodimerization occurs upon GTP-binding and is required for the association with membranous structures. Heterodimer with other family members, including GBP1, GBP3, GBP4 and GBP5. Post-translationally, isoprenylation is required for proper subcellular location. In terms of tissue distribution, widely expressed.

The protein resides in the cytoplasmic vesicle membrane. It is found in the golgi apparatus membrane. The protein localises to the cytoplasm. It localises to the perinuclear region. The catalysed reaction is GTP + H2O = GDP + phosphate + H(+). Functionally, interferon (IFN)-inducible GTPase that plays important roles in innate immunity against a diverse range of bacterial, viral and protozoan pathogens. Hydrolyzes GTP to GMP in 2 consecutive cleavage reactions, but the major reaction product is GDP. Following infection, recruited to the pathogen-containing vacuoles or vacuole-escaped bacteria and acts as a positive regulator of inflammasome assembly by promoting the release of inflammasome ligands from bacteria. Acts by promoting lysis of pathogen-containing vacuoles, releasing pathogens into the cytosol. Following pathogen release in the cytosol, promotes recruitment of proteins that mediate bacterial cytolysis: this liberates ligands that are detected by inflammasomes, such as lipopolysaccharide (LPS) that activates the non-canonical CASP4/CASP11 inflammasome or double-stranded DNA (dsDNA) that activates the AIM2 inflammasome. Confers protection to the protozoan pathogen Toxoplasma gondii. Independently of its GTPase activity, acts as an inhibitor of various viruses infectivity by inhibiting FURIN-mediated maturation of viral envelope proteins. This chain is Guanylate-binding protein 2 (Gbp2), found in Rattus norvegicus (Rat).